Reading from the N-terminus, the 192-residue chain is UPF0316 protein SSP0880 (192 aa).

The next 3 helical transmembrane spans lie at 8–28 (PWLM…CLTM), 40–60 (VAAI…GMVM), and 66–86 (IQNV…GMKI).

The protein belongs to the UPF0316 family.

Its subcellular location is the cell membrane. The sequence is that of UPF0316 protein SSP0880 from Staphylococcus saprophyticus subsp. saprophyticus (strain ATCC 15305 / DSM 20229 / NCIMB 8711 / NCTC 7292 / S-41).